Reading from the N-terminus, the 358-residue chain is Acetylxylan esterase / glucomannan deacetylase (358 aa).

A signal peptide spans 1–18; the sequence is MKLLFPILLLTGSYFLSA. Cys-19 carries N-palmitoyl cysteine lipidation. Cys-19 carries the S-diacylglycerol cysteine lipid modification. Ser-160 functions as the Nucleophile in the catalytic mechanism. Catalysis depends on charge relay system residues Asp-333 and His-335.

Belongs to the carbohydrate esterase 2 (CE2) family.

The protein localises to the cell membrane. It catalyses the reaction Deacetylation of xylans and xylo-oligosaccharides.. The protein operates within glycan degradation; xylan degradation. Its function is as follows. Involved in the degradation of plant cell wall polysaccharides. Catalyzes the deacetylation of acetylated birchwood xylan and glucomannan, with equal efficiency, and of the synthetic substrate 4-nitrophenyl acetate (4-NPAc). Does not bind cellulose, cellohexaose and beta-glucan. The polypeptide is Acetylxylan esterase / glucomannan deacetylase (Cellvibrio japonicus (strain Ueda107) (Pseudomonas fluorescens subsp. cellulosa)).